Consider the following 527-residue polypeptide: MTQQAAEVAKRRTFAIISHPDAGKTTITEKLLLMGKAISIAGTVKSRKSDRHATSDWMEMEKQRGISITTSVMQFPYREHMINLLDTPGHEDFSEDTYRTLTAVDSALMVLDGGKGVEPRTIALMDVCRLRDTPIVSFINKLDRDIRDPIELLDEIEAVLKIKAAPITWPIGCYRDFKGVYHLADDYIIVYTAGHGHERTETKIIEKLDSDEARAHLGDEYERFVEQLELVQGACHEFNQQEFIDGQLTPVFFGTALGNFGVDHVLDAVVNWAPKPLARVANERTVEPAEEKFSGFVFKIQANMDPKHRDRIAFMRICSGRYDKGMKMRHVRLGKDVRIGDALTFFSSEREQLEEAYAGDIIGLHNHGTIQIGDTFTEGEALGFTGIPHFAPELFRRVRLKDPLKSKQLRQGLQQLAEEGATQVFFPQRSNDIILGAVGVLQFDVVASRLKEEYKVECAYEPITVWSARWIDCADKKKLEEFENKAVENLAVDGGGHLTYLAPTRVNLALMEERWPDVKFRATREHH.

One can recognise a tr-type G domain in the interval 9–277; sequence AKRRTFAIIS…AVVNWAPKPL (269 aa). GTP is bound by residues 18–25, 86–90, and 140–143; these read SHPDAGKT, DTPGH, and NKLD.

Belongs to the TRAFAC class translation factor GTPase superfamily. Classic translation factor GTPase family. PrfC subfamily.

The protein resides in the cytoplasm. Increases the formation of ribosomal termination complexes and stimulates activities of RF-1 and RF-2. It binds guanine nucleotides and has strong preference for UGA stop codons. It may interact directly with the ribosome. The stimulation of RF-1 and RF-2 is significantly reduced by GTP and GDP, but not by GMP. This chain is Peptide chain release factor 3, found in Pseudomonas savastanoi pv. phaseolicola (strain 1448A / Race 6) (Pseudomonas syringae pv. phaseolicola (strain 1448A / Race 6)).